Reading from the N-terminus, the 323-residue chain is Fructose-1,6-bisphosphatase class 1 (323 aa).

The Mg(2+) site is built by Glu-84, Asp-103, Leu-105, and Asp-106. Substrate is bound by residues 106 to 109, Asn-198, and Lys-264; that span reads DGSS. Mg(2+) is bound at residue Glu-270.

It belongs to the FBPase class 1 family. As to quaternary structure, homotetramer. The cofactor is Mg(2+).

Its subcellular location is the cytoplasm. It catalyses the reaction beta-D-fructose 1,6-bisphosphate + H2O = beta-D-fructose 6-phosphate + phosphate. It functions in the pathway carbohydrate biosynthesis; gluconeogenesis. This Pseudoalteromonas atlantica (strain T6c / ATCC BAA-1087) protein is Fructose-1,6-bisphosphatase class 1.